The following is a 136-amino-acid chain: Invertebrate-type lysozyme (136 aa).

An N-terminal signal peptide occupies residues 1-11 (METVSVEEGLD). Positions 14–130 (PGMVSQKCLL…WELLQKIPGC (117 aa)) constitute an I-type lysozyme domain. Cystine bridges form between cysteine 21-cysteine 98, cysteine 24-cysteine 130, cysteine 26-cysteine 33, cysteine 38-cysteine 47, cysteine 60-cysteine 80, cysteine 70-cysteine 76, and cysteine 94-cysteine 112. The Proton donor role is filled by glutamate 29. Residue aspartate 41 is the Nucleophile of the active site. A substrate-binding site is contributed by 53–59 (KQPYWID). N-linked (GlcNAc...) asparagine glycosylation is present at asparagine 75. Substrate contacts are provided by residues tyrosine 84, tyrosine 92, 105-107 (HNG), and lysine 119.

As to quaternary structure, homodimer in its autoinhibited state. Active as monomer.

The protein resides in the secreted. It catalyses the reaction Hydrolysis of (1-&gt;4)-beta-linkages between N-acetylmuramic acid and N-acetyl-D-glucosamine residues in a peptidoglycan and between N-acetyl-D-glucosamine residues in chitodextrins.. With respect to regulation, chitinase activity is activated by high salt concentrations which cause the release of the monomer from the autoinhibited homodimer. In terms of biological role, bacteriolytic activity against Gram-positive bacterium M.luteus and thereby probably protects against bacterial infection. Also has chitinase activity. May act as an ispopeptidase, cleaving isopeptide bonds between the side chains of Lys and Gln residues in proteins or in the cross-linking peptide of peptidoglycan in bacterial cell walls. In Ruditapes philippinarum (Japanese carpet shell), this protein is Invertebrate-type lysozyme.